Consider the following 510-residue polypeptide: Peroxidase 2 (510 aa).

Residues 1–19 (MRLTYLPLFAGIAIQSASA) form the signal peptide. A propeptide spanning residues 20–58 (LPDFFKSSVLKPRRTNSLLINPDAQPDLPTAQQASTAAA) is cleaved from the precursor. The active-site Proton acceptor is Asp228. Residue His362 coordinates heme.

As to quaternary structure, homodimer. Heme b is required as a cofactor.

Peroxidase capable of degrading beta-carotene. This Mycetinis scorodonius (Garlic mushroom) protein is Peroxidase 2.